A 21-amino-acid chain; its full sequence is Hydroxypicolinic acid-activating enzyme (21 aa).

Its function is as follows. Involved in etamycin biosynthesis. The polypeptide is Hydroxypicolinic acid-activating enzyme (Streptomyces griseoviridis).